We begin with the raw amino-acid sequence, 1429 residues long: Nitric oxide synthase 1 (1429 aa).

The tract at residues 1–200 (MEENTFGVQQ…LQDIGEHDEL (200 aa)) is interaction with NOSIP. The region spanning 17–99 (SVRLFKRKVG…ETHVVLILRG (83 aa)) is the PDZ domain. Disordered regions lie at residues 152–174 (VTGL…SVSQ), 214–255 (GSKA…DNDR), and 271–298 (NNPY…SRCP). Over residues 160 to 174 (QHAQGHGQGAGSVSQ) the composition is skewed to low complexity. The tract at residues 163 to 240 (QGHGQGAGSV…TGIQVDRDLD (78 aa)) is interaction with DYNLL1/PIN. A compositionally biased stretch (basic and acidic residues) spans 226–243 (AEMKDTGIQVDRDLDGKS). At serine 280 the chain carries Phosphoserine. The segment covering 280 to 294 (SPTSGKQSPTKNGSP) has biased composition (polar residues). A (6R)-L-erythro-5,6,7,8-tetrahydrobiopterin-binding site is contributed by serine 334. Residue cysteine 415 coordinates heme b. Positions 478, 587, 588, and 592 each coordinate L-arginine. (6R)-L-erythro-5,6,7,8-tetrahydrobiopterin is bound by residues valine 677, tryptophan 678, and phenylalanine 691. Heme b is bound at residue tyrosine 706. Positions 725 to 745 (KRRAIGFKKLAEAVKFSAKLM) are calmodulin-binding. The region spanning 755–935 (ATILYATETG…AFRTWAKKVF (181 aa)) is the Flavodoxin-like domain. 8 residues coordinate FMN: threonine 761, glutamate 762, threonine 763, lysine 765, serine 766, serine 807, threonine 808, and glycine 812. 3 positions are modified to phosphoserine: serine 847, serine 857, and serine 858. FMN-binding residues include serine 886, histidine 891, cysteine 893, glutamate 919, and glutamine 923. The FAD-binding FR-type domain occupies 990 to 1237 (KRVSAARLLS…VRGAPSFHLP (248 aa)). Arginine 1010 contributes to the NADP(+) binding site. FAD contacts are provided by histidine 1032, arginine 1173, tyrosine 1174, tyrosine 1175, serine 1176, threonine 1191, and alanine 1193. Position 1196 (serine 1196) interacts with NADP(+). The FAD site is built by tyrosine 1197, valine 1210, cysteine 1211, and serine 1212. 10 residues coordinate NADP(+): threonine 1251, arginine 1284, serine 1313, arginine 1314, lysine 1320, tyrosine 1322, glutamine 1324, aspartate 1357, threonine 1398, and arginine 1400.

It belongs to the NOS family. In terms of assembly, homodimer. Interacts with DLG4 (via N-terminal tandem pair of PDZ domains); the interaction possibly being prevented by the association between NOS1 and CAPON. Forms a ternary complex with CAPON and RASD1. Forms a ternary complex with CAPON and SYN1. Interacts with ZDHHC23. Interacts with NOSIP; which may impair its synaptic location. Interacts with HTR4. Interacts with SLC6A4. Interacts with VAC14. Forms a complex with ASL, ASS1 and SLC7A1; the complex regulates cell-autonomous L-arginine synthesis and citrulline recycling while channeling extracellular L-arginine to nitric oxide synthesis pathway. Interacts with DMD; localizes NOS1 to sarcolemma in muscle cells. Interacts with DYNLL1; inhibits the nitric oxide synthase activity. Heme b serves as cofactor. Requires FAD as cofactor. FMN is required as a cofactor. It depends on (6R)-L-erythro-5,6,7,8-tetrahydrobiopterin as a cofactor. Ubiquitinated; mediated by STUB1/CHIP in the presence of Hsp70 and Hsp40 (in vitro). Isoform N-NOS-1 is expressed in brain and colorectum. Found in the Auerbach's plexus of the enteric nervous system. Isoform PNNOS is expressed in the penis, urethra, prostate, and skeletal muscle, and coexists with the cerebellar nnos in the pelvic plexus, bladder and liver, and is detectable in the cerebellum.

The protein localises to the cell membrane. It localises to the sarcolemma. It is found in the cell projection. The protein resides in the dendritic spine. The enzyme catalyses 2 L-arginine + 3 NADPH + 4 O2 + H(+) = 2 L-citrulline + 2 nitric oxide + 3 NADP(+) + 4 H2O. With respect to regulation, stimulated by calcium/calmodulin. Inhibited by DYNLL1 that prevents the dimerization of the protein. Inhibited by NOSIP. In terms of biological role, produces nitric oxide (NO) which is a messenger molecule with diverse functions throughout the body. In the brain and peripheral nervous system, NO displays many properties of a neurotransmitter. Inhibitory transmitter for non-adrenergic and non-cholinergic nerves in the colorectum. Probably has nitrosylase activity and mediates cysteine S-nitrosylation of cytoplasmic target proteins such SRR. Inhibitory transmitter for non-adrenergic and non-cholinergic nerves in the colorectum. The chain is Nitric oxide synthase 1 from Rattus norvegicus (Rat).